The chain runs to 209 residues: Orotate phosphoribosyltransferase (209 aa).

5-phospho-alpha-D-ribose 1-diphosphate-binding positions include Arg-96, Lys-100, His-102, and 122–130 (EDLISTGGS). Ser-126 contacts orotate.

Belongs to the purine/pyrimidine phosphoribosyltransferase family. PyrE subfamily. In terms of assembly, homodimer. Mg(2+) serves as cofactor.

The enzyme catalyses orotidine 5'-phosphate + diphosphate = orotate + 5-phospho-alpha-D-ribose 1-diphosphate. It functions in the pathway pyrimidine metabolism; UMP biosynthesis via de novo pathway; UMP from orotate: step 1/2. In terms of biological role, catalyzes the transfer of a ribosyl phosphate group from 5-phosphoribose 1-diphosphate to orotate, leading to the formation of orotidine monophosphate (OMP). The protein is Orotate phosphoribosyltransferase of Streptococcus mutans serotype c (strain ATCC 700610 / UA159).